An 84-amino-acid chain; its full sequence is Small ribosomal subunit protein uS17 (84 aa).

The protein belongs to the universal ribosomal protein uS17 family. In terms of assembly, part of the 30S ribosomal subunit.

Functionally, one of the primary rRNA binding proteins, it binds specifically to the 5'-end of 16S ribosomal RNA. This is Small ribosomal subunit protein uS17 from Clostridium kluyveri (strain NBRC 12016).